Here is a 202-residue protein sequence, read N- to C-terminus: Urease accessory protein UreG (202 aa).

Residue 10 to 17 (GPVGSGKT) coordinates GTP.

Belongs to the SIMIBI class G3E GTPase family. UreG subfamily. Homodimer. UreD, UreF and UreG form a complex that acts as a GTP-hydrolysis-dependent molecular chaperone, activating the urease apoprotein by helping to assemble the nickel containing metallocenter of UreC. The UreE protein probably delivers the nickel.

Its subcellular location is the cytoplasm. In terms of biological role, facilitates the functional incorporation of the urease nickel metallocenter. This process requires GTP hydrolysis, probably effectuated by UreG. The chain is Urease accessory protein UreG from Synechococcus sp. (strain JA-3-3Ab) (Cyanobacteria bacterium Yellowstone A-Prime).